Consider the following 159-residue polypeptide: Protein Smg homolog (159 aa).

This sequence belongs to the Smg family.

This is Protein Smg homolog from Vibrio parahaemolyticus serotype O3:K6 (strain RIMD 2210633).